A 387-amino-acid chain; its full sequence is Galactokinase (387 aa).

33 to 36 (EHTD) lines the substrate pocket. ATP is bound by residues serine 67 and 123 to 129 (GAGLSSS). Residues serine 129 and glutamate 161 each coordinate Mg(2+). Aspartate 173 acts as the Proton acceptor in catalysis. Tyrosine 223 provides a ligand contact to substrate.

Belongs to the GHMP kinase family. GalK subfamily.

The protein resides in the cytoplasm. The catalysed reaction is alpha-D-galactose + ATP = alpha-D-galactose 1-phosphate + ADP + H(+). It participates in carbohydrate metabolism; galactose metabolism. Catalyzes the transfer of the gamma-phosphate of ATP to D-galactose to form alpha-D-galactose-1-phosphate (Gal-1-P). The chain is Galactokinase from Lacticaseibacillus casei (Lactobacillus casei).